The sequence spans 686 residues: Translation initiation factor IF-2 (686 aa).

Residues 54–105 (KPSVADEFEVEEKVVRSKKNSNKKKKKGKGNEDKRQENFAGRQQTQTVETPD) are disordered. Basic residues predominate over residues 69 to 81 (RSKKNSNKKKKKG). Residues 188–357 (ERPAVVTIMG…LLISEVEEYK (170 aa)) form the tr-type G domain. A G1 region spans residues 197 to 204 (GHVDHGKT). A GTP-binding site is contributed by 197–204 (GHVDHGKT). The G2 stretch occupies residues 222-226 (GITQH). The segment at 243 to 246 (DTPG) is G3. GTP contacts are provided by residues 243–247 (DTPGH) and 297–300 (NKMD). The G4 stretch occupies residues 297-300 (NKMD). The tract at residues 333–335 (SAI) is G5.

The protein belongs to the TRAFAC class translation factor GTPase superfamily. Classic translation factor GTPase family. IF-2 subfamily.

It localises to the cytoplasm. Functionally, one of the essential components for the initiation of protein synthesis. Protects formylmethionyl-tRNA from spontaneous hydrolysis and promotes its binding to the 30S ribosomal subunits. Also involved in the hydrolysis of GTP during the formation of the 70S ribosomal complex. The protein is Translation initiation factor IF-2 of Bacillus anthracis (strain A0248).